We begin with the raw amino-acid sequence, 351 residues long: N-acetyl-gamma-glutamyl-phosphate reductase (351 aa).

Cys154 is an active-site residue.

It belongs to the NAGSA dehydrogenase family. Type 1 subfamily.

Its subcellular location is the cytoplasm. It carries out the reaction N-acetyl-L-glutamate 5-semialdehyde + phosphate + NADP(+) = N-acetyl-L-glutamyl 5-phosphate + NADPH + H(+). It functions in the pathway amino-acid biosynthesis; L-arginine biosynthesis; N(2)-acetyl-L-ornithine from L-glutamate: step 3/4. Functionally, catalyzes the NADPH-dependent reduction of N-acetyl-5-glutamyl phosphate to yield N-acetyl-L-glutamate 5-semialdehyde. The sequence is that of N-acetyl-gamma-glutamyl-phosphate reductase from Prochlorococcus marinus (strain AS9601).